Here is a 266-residue protein sequence, read N- to C-terminus: Uxu operon regulator (266 aa).

Positions 23-91 (NRTYTRIGQL…KGSGVYVVRT (69 aa)) constitute an HTH gntR-type domain. The segment at residues 51–70 (EREISEKFGVSRTIVREAMV) is a DNA-binding region (H-T-H motif).

Its function is as follows. Repressor for the uxuRBA operon. The chain is Uxu operon regulator (uxuR) from Haemophilus influenzae (strain ATCC 51907 / DSM 11121 / KW20 / Rd).